The chain runs to 443 residues: Transcriptional regulatory protein ZraR (443 aa).

Residues 7-121 (DILVVDDDIS…KLQLTLSEAL (115 aa)) enclose the Response regulatory domain. Asp-56 carries the post-translational modification 4-aspartylphosphate. The Sigma-54 factor interaction domain occupies 141 to 370 (MVGDSPAMRA…LENAVERAVV (230 aa)). Positions 172, 173, 329, and 359 each coordinate ATP. The H-T-H motif DNA-binding region spans 423 to 442 (KTEAARRLGITRKTLLAKLS).

In terms of processing, phosphorylated by ZraS.

It localises to the cytoplasm. Its activity is regulated as follows. Activity of the ZraS/ZraR two-component system is repressed by the zinc-bound form of ZraP, which probably interacts with the periplasmic region of ZraS. Its function is as follows. Part of the Zra signaling pathway, an envelope stress response (ESR) system composed of the periplasmic accessory protein ZraP, the histidine kinase ZraS and the transcriptional regulator ZraR. The ZraPSR system contributes to antibiotic resistance and is important for membrane integrity in the presence of membrane-targeting biocides. ZraR is a member of the two-component regulatory system ZraS/ZraR. When activated by ZraS, acts in conjunction with sigma-54 to regulate the expression of zraP in the presence of high Zn(2+) or Pb(2+) concentrations. Also positively autoregulates the expression of the zraSR operon. The sequence is that of Transcriptional regulatory protein ZraR (zraR) from Klebsiella oxytoca.